We begin with the raw amino-acid sequence, 258 residues long: Type III pantothenate kinase (258 aa).

ATP is bound at residue 6–13 (DVGNTNTV). Residues Y100 and 107-110 (GADR) each bind substrate. D109 (proton acceptor) is an active-site residue. Residue D129 participates in K(+) binding. Residue T132 coordinates ATP. T184 is a binding site for substrate.

Belongs to the type III pantothenate kinase family. As to quaternary structure, homodimer. The cofactor is NH4(+). K(+) serves as cofactor.

It localises to the cytoplasm. It catalyses the reaction (R)-pantothenate + ATP = (R)-4'-phosphopantothenate + ADP + H(+). The protein operates within cofactor biosynthesis; coenzyme A biosynthesis; CoA from (R)-pantothenate: step 1/5. Its function is as follows. Catalyzes the phosphorylation of pantothenate (Pan), the first step in CoA biosynthesis. The protein is Type III pantothenate kinase of Geobacillus sp. (strain WCH70).